Here is a 224-residue protein sequence, read N- to C-terminus: Probable 2' cyclic ADP-D-ribose synthase BdTIR (224 aa).

Residues 51 to 178 (SRYEVFINHR…RFKFALREAK (128 aa)) enclose the TIR domain. Residues 60–65 (RGVDTK) and Gly93 each bind NAD(+). Glu127 is a catalytic residue.

Homodimer.

It carries out the reaction NAD(+) + H2O = ADP-D-ribose + nicotinamide + H(+). The enzyme catalyses NADP(+) + H2O = ADP-D-ribose 2'-phosphate + nicotinamide + H(+). It catalyses the reaction NAD(+) = 2'cADPR + nicotinamide + H(+). Its function is as follows. An NAD(+) hydrolase (NADase). Upon activation catalyzes cleavage of NAD(+) into ADP-D-ribose (ADPR) and nicotinamide; NAD(+) cleavage triggers a defense system that promotes cell death. In addition to ADPR, also generates a cyclization variant of cyclic ADPR termed v-cADPR (2'cADPR). Also hydrolyzes NADP(+), but not other NAD(+)-related molecules. v-cADPR activates ThsA, an NAD(+) hydrolase in B.cereus (AC J8G6Z1). Probably makes 2'cADPR; the cADPR made by this protein is bound by cmTad1 (AC P0DW61) and activates ThsA from B.cereus. Boiling cmTad1 bound to the cyclic nucleotide releases 2'cADPR, strongly suggesting it is the product of this protein. The sequence is that of Probable 2' cyclic ADP-D-ribose synthase BdTIR from Brachypodium distachyon (Purple false brome).